A 379-amino-acid chain; its full sequence is Cytochrome b (379 aa).

The next 4 membrane-spanning stretches (helical) occupy residues 33–53, 77–98, 113–133, and 178–198; these read FGSL…FLAM, WTIR…FIHV, WNVG…GYVL, and FFAL…IHLL. Positions 83 and 97 each coordinate heme b. Residues His182 and His196 each coordinate heme b. A ubiquinone is bound at residue His201. A run of 4 helical transmembrane segments spans residues 226–246, 288–308, 320–340, and 347–367; these read TKDF…ALFY, LGGV…PFLQ, LSQF…WIGG, and FINI…FIMP.

This sequence belongs to the cytochrome b family. In terms of assembly, the cytochrome bc1 complex contains 11 subunits: 3 respiratory subunits (MT-CYB, CYC1 and UQCRFS1), 2 core proteins (UQCRC1 and UQCRC2) and 6 low-molecular weight proteins (UQCRH/QCR6, UQCRB/QCR7, UQCRQ/QCR8, UQCR10/QCR9, UQCR11/QCR10 and a cleavage product of UQCRFS1). This cytochrome bc1 complex then forms a dimer. It depends on heme b as a cofactor.

It localises to the mitochondrion inner membrane. Functionally, component of the ubiquinol-cytochrome c reductase complex (complex III or cytochrome b-c1 complex) that is part of the mitochondrial respiratory chain. The b-c1 complex mediates electron transfer from ubiquinol to cytochrome c. Contributes to the generation of a proton gradient across the mitochondrial membrane that is then used for ATP synthesis. The sequence is that of Cytochrome b (MT-CYB) from Lepilemur dorsalis (Grey-backed sportive lemur).